A 361-amino-acid polypeptide reads, in one-letter code: S-adenosylmethionine decarboxylase proenzyme (361 aa).

Residues E11 and E14 contribute to the active site. S71 serves as the catalytic Schiff-base intermediate with substrate; via pyruvic acid. S71 bears the Pyruvic acid (Ser); by autocatalysis mark. C85 (proton donor; for catalytic activity) is an active-site residue. Residues S234 and H247 each act as proton acceptor; for processing activity in the active site.

This sequence belongs to the eukaryotic AdoMetDC family. Requires pyruvate as cofactor. In terms of processing, is synthesized initially as an inactive proenzyme. Formation of the active enzyme involves a self-maturation process in which the active site pyruvoyl group is generated from an internal serine residue via an autocatalytic post-translational modification. Two non-identical subunits are generated from the proenzyme in this reaction, and the pyruvate is formed at the N-terminus of the alpha chain, which is derived from the carboxyl end of the proenzyme. The post-translation cleavage follows an unusual pathway, termed non-hydrolytic serinolysis, in which the side chain hydroxyl group of the serine supplies its oxygen atom to form the C-terminus of the beta chain, while the remainder of the serine residue undergoes an oxidative deamination to produce ammonia and the pyruvoyl group blocking the N-terminus of the alpha chain.

It carries out the reaction S-adenosyl-L-methionine + H(+) = S-adenosyl 3-(methylsulfanyl)propylamine + CO2. Its pathway is amine and polyamine biosynthesis; S-adenosylmethioninamine biosynthesis; S-adenosylmethioninamine from S-adenosyl-L-methionine: step 1/1. The chain is S-adenosylmethionine decarboxylase proenzyme (SAMDC) from Daucus carota (Wild carrot).